The following is a 131-amino-acid chain: Insulin-like 3 (131 aa).

A signal peptide spans 1 to 20 (MDPRLPAWALVLLGPALVFA). 3 cysteine pairs are disulfide-bonded: cysteine 34-cysteine 116, cysteine 46-cysteine 129, and cysteine 115-cysteine 120. The propeptide at 58–104 (PATGGDRELLQWLERRHLLHGLVADSNLTLGPGLQPLPQTSHHHRHH) is c peptide like.

The protein belongs to the insulin family. As to quaternary structure, heterodimer of a B chain and an A chain linked by two disulfide bonds. As to expression, expressed in prenatal and postnatal Leydig cells. Found as well in the corpus luteum, trophoblast, fetal membranes and breast.

It is found in the secreted. Its function is as follows. Seems to play a role in testicular function. May be a trophic hormone with a role in testicular descent in fetal life. Is a ligand for LGR8 receptor. This chain is Insulin-like 3 (INSL3), found in Homo sapiens (Human).